Consider the following 543-residue polypeptide: Putative cysteine ligase BshC (543 aa).

Residues 419–440 (DEKNNDNIDEVVEEVKAQISDI) are a coiled coil.

Belongs to the BshC family.

In terms of biological role, involved in bacillithiol (BSH) biosynthesis. May catalyze the last step of the pathway, the addition of cysteine to glucosamine malate (GlcN-Mal) to generate BSH. This chain is Putative cysteine ligase BshC, found in Oceanobacillus iheyensis (strain DSM 14371 / CIP 107618 / JCM 11309 / KCTC 3954 / HTE831).